We begin with the raw amino-acid sequence, 82 residues long: Small ribosomal subunit protein bS16 (82 aa).

It belongs to the bacterial ribosomal protein bS16 family.

The polypeptide is Small ribosomal subunit protein bS16 (Pectobacterium carotovorum subsp. carotovorum (strain PC1)).